The following is a 439-amino-acid chain: UPF0597 protein Dalk_4447 (439 aa).

The protein belongs to the UPF0597 family.

The polypeptide is UPF0597 protein Dalk_4447 (Desulfatibacillum aliphaticivorans).